The following is a 96-amino-acid chain: UPF0235 protein YggU (96 aa).

The protein belongs to the UPF0235 family.

In Salmonella typhimurium (strain LT2 / SGSC1412 / ATCC 700720), this protein is UPF0235 protein YggU.